Here is a 676-residue protein sequence, read N- to C-terminus: Pescadillo homolog (676 aa).

Residues 298 to 327 (IAAMADDEDEQEVEMAEADAEDDDEEENTE) adopt a coiled-coil conformation. Disordered stretches follow at residues 298–338 (IAAM…TAPD), 413–439 (PLANGASAAGAEDAATPQVQWPHSTKP), 478–502 (VKPKKGEYDPNLPLAAQQPDGEAEA), and 515–676 (EVDD…AERA). Acidic residues predominate over residues 302–327 (ADDEDEQEVEMAEADAEDDDEEENTE). A BRCT domain is found at 351–466 (EIASLFAPFT…KLLRPDLYAP (116 aa)). A compositionally biased stretch (low complexity) spans 415 to 427 (ANGASAAGAEDAA). Acidic residues-rich tracts occupy residues 515 to 524 (EVDDDEDMDA), 539 to 557 (DVADSDDDDEDDSESDAEG), and 565 to 577 (FDDESEAESDISE). The stretch at 568 to 676 (ESEAESDISE…EKAKAAAERA (109 aa)) forms a coiled coil. 4 stretches are compositionally biased toward basic and acidic residues: residues 579-608 (EAARLQHQRELEAEATGKKLDVKAPTKKEQ), 620-631 (KRAEEEERDRQK), 643-659 (KRIEYGENKRDTESENL), and 666-676 (LEKAKAAAERA).

Belongs to the pescadillo family. In terms of assembly, component of the NOP7 complex, composed of ERB1, NOP7 and YTM1. The complex is held together by ERB1, which interacts with NOP7 via its N-terminal domain and with YTM1 via a high-affinity interaction between the seven-bladed beta-propeller domains of the 2 proteins. The NOP7 complex associates with the 66S pre-ribosome.

The protein resides in the nucleus. It localises to the nucleolus. It is found in the nucleoplasm. Functionally, component of the NOP7 complex, which is required for maturation of the 25S and 5.8S ribosomal RNAs and formation of the 60S ribosome. This Phaeosphaeria nodorum (strain SN15 / ATCC MYA-4574 / FGSC 10173) (Glume blotch fungus) protein is Pescadillo homolog.